A 392-amino-acid polypeptide reads, in one-letter code: 5-azacytidine-induced protein 2 (392 aa).

Residues 1 to 197 (MDALVEDDIC…IELQKAKQTD (197 aa)) are homodimerization. Coiled-coil stretches lie at residues 40–76 (ALVT…LIAR) and 102–196 (DRDN…AKQT). The tract at residues 216 to 257 (SDNMQHAYWELKREMSNLHLVTQVQAELLRKLKTSTAIKKAC) is interaction with TBK1 and IKBKE. A phosphoserine mark is found at serine 318 and serine 353.

Homodimer. Interacts with IKBKE. Interacts with TBK1. Interacts with TICAM1. Interacts with TAX1BP1. Interacts with CALCOCO2. As to quaternary structure, (Microbial infection) Interacts with vaccinia virus protein C6. In terms of processing, ubiquitinated via 'Lys-48'-linked polyubiquitination by TRIM38, leading to its degradation. As to expression, widely expressed. Abundant expression seen in the pancreas and testis.

Its subcellular location is the cytoplasm. In terms of biological role, adapter protein which binds TBK1 and IKBKE playing a role in antiviral innate immunity. Activates serine/threonine-protein kinase TBK1 and facilitates its oligomerization. Enhances the phosphorylation of NF-kappa-B p65 subunit RELA by TBK1. Promotes TBK1-induced as well as TNF-alpha or PMA-induced activation of NF-kappa-B. Participates in IFNB promoter activation via TICAM1. This is 5-azacytidine-induced protein 2 (AZI2) from Homo sapiens (Human).